Consider the following 354-residue polypeptide: Rhodopsin (354 aa).

Residues 1-36 (MNGTEGPNFYVPMSNKTGIVRSPFEYPQYYLAEPWK) are Extracellular-facing. Asn-2 and Asn-15 each carry an N-linked (GlcNAc...) asparagine glycan. A helical transmembrane segment spans residues 37-61 (YSVLAAYMFLLILLGLPINFMTLYV). The Cytoplasmic portion of the chain corresponds to 62–73 (TIQHKKLRTPLN). A helical transmembrane segment spans residues 74–96 (YILLNLAFANHFMVLCGFTITMY). Topologically, residues 97 to 110 (TSLHGYFVFGQTGC) are extracellular. The cysteines at positions 110 and 187 are disulfide-linked. The helical transmembrane segment at 111–133 (YFEGFFATLGGEIALWSLVVLAI) threads the bilayer. The short motif at 134 to 136 (ERY) is the 'Ionic lock' involved in activated form stabilization element. Residues 134 to 152 (ERYIVVCKPMSNFRFGENH) lie on the Cytoplasmic side of the membrane. A helical membrane pass occupies residues 153-173 (AMMGVAFTWIMALACAVPPLF). Residues 174–202 (GWSRYIPEGMQCSCGVDYYTLKPEVNNES) lie on the Extracellular side of the membrane. A helical membrane pass occupies residues 203–224 (FVIYMFVVHFLIPLIIISFCYG). The Cytoplasmic segment spans residues 225–252 (RLVCTVKEAAAQQQESATTQKAEKEVTR). Residues 253–274 (MVVIMVIFFLICWVPYAYVAFY) form a helical membrane-spanning segment. The Extracellular segment spans residues 275 to 286 (IFTHQGSEFGPI). The helical transmembrane segment at 287–308 (FMTVPAFFAKSSAIYNPVIYIM) threads the bilayer. The residue at position 296 (Lys-296) is an N6-(retinylidene)lysine. Over 309-354 (LNKQFRNCMITTLCCGKNPFGDEDASSAATSKTEATSVSTSQVSPA) the chain is Cytoplasmic. S-palmitoyl cysteine attachment occurs at residues Cys-322 and Cys-323. Residues 331–354 (EDASSAATSKTEATSVSTSQVSPA) are disordered. Residues 334 to 354 (SSAATSKTEATSVSTSQVSPA) are compositionally biased toward low complexity.

The protein belongs to the G-protein coupled receptor 1 family. Opsin subfamily. Contains one covalently linked retinal chromophore. Upon light absorption, the covalently bound 11-cis-retinal is converted to all-trans-retinal. After hydrolysis of the Schiff base and release of the covalently bound all-trans-retinal, active rhodopsin is regenerated by binding of a fresh molecule of 11-cis-retinal. In terms of tissue distribution, retina. Localized in the ventral part of the retina.

The protein localises to the membrane. Its subcellular location is the cell projection. It is found in the cilium. The protein resides in the photoreceptor outer segment. Its function is as follows. Photoreceptor required for image-forming vision at low light intensity. Required for photoreceptor cell viability after birth. May use a mixture of retinal and 3-dehydroretinal as visual pigment. Light-induced isomerization of 11-cis to all-trans retinal triggers a conformational change that activates signaling via G-proteins. Subsequent receptor phosphorylation mediates displacement of the bound G-protein alpha subunit by arrestin and terminates signaling. This chain is Rhodopsin (RHO), found in Aquarana catesbeiana (American bullfrog).